The sequence spans 204 residues: Protein phosphatase 1 regulatory subunit 1B (204 aa).

Residue Met1 is modified to N-acetylmethionine. The tract at residues 1–204 (MDPKDRKKIQ…QRPSPSEPGT (204 aa)) is disordered. Residue Thr34 is modified to Phosphothreonine; by PKA. Residues 41-63 (LSEHSSPEEEASPHQRASGEGHH) show a composition bias toward basic and acidic residues. 2 positions are modified to phosphoserine: Ser45 and Ser46. Residue Thr75 is modified to Phosphothreonine; by CDK5. A compositionally biased stretch (polar residues) spans 89–100 (HLQSISNLNENQ). Ser102 is modified (phosphoserine). The segment covering 109 to 118 (GELRELGYPR) has biased composition (basic and acidic residues). Composition is skewed to acidic residues over residues 119–138 (EEDE…EDSQ) and 170–183 (DESE…DQVE). The residue at position 137 (Ser137) is a Phosphoserine. At Ser198 the chain carries Phosphoserine.

The protein belongs to the protein phosphatase inhibitor 1 family. Post-translationally, dopamine- and cyclic AMP-regulated neuronal phosphoprotein. In terms of processing, phosphorylation of Thr-34 is required for activity.

It is found in the cytoplasm. Inhibitor of protein-phosphatase 1. The chain is Protein phosphatase 1 regulatory subunit 1B (PPP1R1B) from Homo sapiens (Human).